Reading from the N-terminus, the 470-residue chain is Negative regulator of sexual conjugation and meiosis (470 aa).

The Protein kinase domain occupies 18–295 (LRFVSIIGAG…ITLPELSTLV (278 aa)). ATP is bound by residues 24-32 (IGAGAYGVV) and K47. The Proton acceptor role is filled by D143. S469 carries the post-translational modification Phosphoserine.

It belongs to the protein kinase superfamily. Ser/Thr protein kinase family.

It carries out the reaction L-seryl-[protein] + ATP = O-phospho-L-seryl-[protein] + ADP + H(+). The enzyme catalyses L-threonyl-[protein] + ATP = O-phospho-L-threonyl-[protein] + ADP + H(+). This protein is a negative regulator of both sexual conjugation and meiosis. It phosphorylates mei2. It blocks the onset of meiosis until conjugation takes place. This Schizosaccharomyces pombe (strain 972 / ATCC 24843) (Fission yeast) protein is Negative regulator of sexual conjugation and meiosis (ran1).